Reading from the N-terminus, the 391-residue chain is Arrestin-C (391 aa).

The segment covering 369 to 379 (ARQEPGGREES) has biased composition (basic and acidic residues). Positions 369–391 (ARQEPGGREESQEALAAEGDEGS) are disordered.

This sequence belongs to the arrestin family. In terms of assembly, homodimer; disulfide-linked in response to retinal illumination. Interacts with CXCR4; the interaction is dependent on the C-terminal phosphorylation of CXCR4 and modulates the calcium ion mobilization activity of CXCR4. Interacts with GPR84.

Its subcellular location is the photoreceptor inner segment. It localises to the cell projection. The protein resides in the cilium. It is found in the photoreceptor outer segment. Its function is as follows. May play a role in an as yet undefined retina-specific signal transduction. Could bind to photoactivated-phosphorylated red/green opsins. This is Arrestin-C (ARR3) from Sus scrofa (Pig).